Here is a 292-residue protein sequence, read N- to C-terminus: Secreted frizzled-related protein 2 (292 aa).

Positions 1–20 (MPRRLCALLLLASQCLGSTA) are cleaved as a signal peptide. Positions 32–152 (YKRSNCKPIP…PKDNDLCIPL (121 aa)) constitute an FZ domain. 7 disulfides stabilise this stretch: cysteine 37-cysteine 100, cysteine 47-cysteine 93, cysteine 84-cysteine 122, cysteine 111-cysteine 149, cysteine 115-cysteine 139, cysteine 169-cysteine 242, and cysteine 187-cysteine 292. The NTR domain occupies 169 to 292 (CDACKNKNED…FSRSIRKLQC (124 aa)).

Belongs to the secreted frizzled-related protein (sFRP) family.

The protein resides in the secreted. Functionally, soluble frizzled-related proteins (sFRPS) function as modulators of Wnt signaling through direct interaction with Wnts. They have a role in regulating cell growth and differentiation in specific cell types. SFRP2 appears to be associated with myogenesis. The protein is Secreted frizzled-related protein 2 (SFRP2) of Gallus gallus (Chicken).